The sequence spans 85 residues: Toxin BmKaIT1 (85 aa).

An N-terminal signal peptide occupies residues 1–19; sequence MNYLVMISFAFLLMTGVES. One can recognise an LCN-type CS-alpha/beta domain in the interval 21–83; the sequence is RDAYIAQNYN…VPIRVPGKCH (63 aa). 4 disulfide bridges follow: C31–C82, C35–C55, C41–C65, and C45–C67. The propeptide at 84–85 is removed by a carboxypeptidase; that stretch reads RR.

It belongs to the long (4 C-C) scorpion toxin superfamily. Sodium channel inhibitor family. Alpha subfamily. As to expression, expressed by the venom gland.

The protein localises to the secreted. In terms of biological role, alpha toxins bind voltage-independently at site-3 of sodium channels (Nav) and inhibit the inactivation of the activated channels, thereby blocking neuronal transmission. Shows a high toxicity toward insects and moderate toxicity against mammals. In Olivierus martensii (Manchurian scorpion), this protein is Toxin BmKaIT1.